The primary structure comprises 99 residues: Orphan antixoxin protein TacA (99 aa).

The protein belongs to the TacA antitoxin family.

Its function is as follows. Putative antitoxin component of a toxin-antitoxin (TA) system; its cognate toxin (usually a tRNA acetylase) is unknown. This Haemophilus influenzae (strain ATCC 51907 / DSM 11121 / KW20 / Rd) protein is Orphan antixoxin protein TacA.